We begin with the raw amino-acid sequence, 488 residues long: Poly(3-hydroxybutyrate) depolymerase (488 aa).

An N-terminal signal peptide occupies residues 1 to 27; sequence MVRRLWRRIAGWLAACVAILCAFPLHA. Ser-166 acts as the Charge relay system in catalysis. The region spanning 346–428 is the Fibronectin type-III domain; it reads APTGLAVTAT…AAVSATTKSA (83 aa).

This sequence belongs to the AB hydrolase superfamily. Lipase family.

Its subcellular location is the secreted. It carries out the reaction [(3R)-hydroxybutanoate](n) + H2O = [(3R)-hydroxybutanoate](n-2) + (3R)-hydroxybutanoate dimer + H(+). It catalyses the reaction [(3R)-hydroxybutanoate](n) + H2O = [(3R)-hydroxybutanoate](n-3) + (3R)-hydroxybutanoate trimer + H(+). The enzyme catalyses [(3R)-hydroxybutanoate](n) + H2O = [(3R)-hydroxybutanoate](n-1) + (R)-3-hydroxybutanoate + H(+). The catalysed reaction is [(3R)-hydroxybutanoate](n) + H2O = [(3R)-hydroxybutanoate](n-5) + (3R)-hydroxybutanoate pentamer + H(+). It carries out the reaction [(3R)-hydroxybutanoate](n) + H2O = [(3R)-hydroxybutanoate](n-4) + (3R)-hydroxybutanoate tetramer + H(+). This protein degrades water-insoluble and water-soluble PHB to monomeric D(-)-3-hydroxybutyrate. The protein is Poly(3-hydroxybutyrate) depolymerase of Ralstonia pickettii (Burkholderia pickettii).